We begin with the raw amino-acid sequence, 399 residues long: MDKIIEKILTFSDPYIALDERVVIKKNEIIVDGNHFPYTKPAIIAVGKASYKMAKFFIDKLKDVKGLVILPKGSYISLPKVEVIESTHPDISELSFKAGTEVIKFLKNEDYDLLIFLLSGGASALMEYSNVPYEILRDINEKLVKSGLSVNEINIVRKHLSLIKGGKLTEFSKAPILTLIVSDVPGGDLSAVGSGPTLPDSSTVDDAKLILNKVGLGEYSKYLIETKKEVHNSFNFLILDINIVLRKLRDIVQNPIILSSEIRGDAYSFGQNLAGIVNTSFSNLGLKPPYTLLAGGEPDVKIEGKAGKGGRNGEVCLGFLKWVKRNSNHRFKLYAIATDGIDGNSEYAGCIVDENTIVDNIEYYIYSHSSYEALEKVGRVIKTGYTFTNVNNVYVLEVT.

Residue K48 coordinates substrate.

Belongs to the glycerate kinase type-1 family. In terms of assembly, homodimer. The cofactor is Mg(2+). It depends on Ni(2+) as a cofactor. Mn(2+) serves as cofactor. Requires Co(2+) as cofactor. Ca(2+) is required as a cofactor. The cofactor is Zn(2+). It depends on Sr(2+) as a cofactor.

The enzyme catalyses (R)-glycerate + ATP = (2R)-2-phosphoglycerate + ADP + H(+). Catalyzes the ATP-dependent phosphorylation of D-glycerate to 2-phosphoglycerate. It can also utilize GTP, CTP, UTP, ADP, AMP or pyrophosphate as phosphate donor. In Sulfurisphaera tokodaii (strain DSM 16993 / JCM 10545 / NBRC 100140 / 7) (Sulfolobus tokodaii), this protein is Glycerate 2-kinase (gck).